The following is a 124-amino-acid chain: MTMYATLEEAIDAAREEFLADNPGIDAEDANVQQFNAQKYVLQDGDIMWQVEFFADEGEEGECLPMLSGEAAQSVFDGDYDEIEIRQEWQEENTLHEWDEGEFQLEPPLDTEEGRAAADEWDER.

Residues 96–124 are disordered; that stretch reads HEWDEGEFQLEPPLDTEEGRAAADEWDER. Residues 112–124 are compositionally biased toward basic and acidic residues; sequence EEGRAAADEWDER.

In terms of biological role, could participate in the normal pathway of protein export. This is Acidic protein MsyB (msyB) from Escherichia coli (strain K12).